Reading from the N-terminus, the 1237-residue chain is Tyrosine-protein kinase sid-3 (1237 aa).

Residues isoleucine 107–leucine 369 enclose the Protein kinase domain. Residues isoleucine 113–valine 121 and lysine 139 contribute to the ATP site. Aspartate 230 serves as the catalytic Proton acceptor. The SH3 domain occupies alanine 366–asparagine 426. Disordered stretches follow at residues asparagine 683–asparagine 704, proline 741–glutamine 802, isoleucine 826–arginine 919, serine 940–isoleucine 986, serine 999–proline 1018, and glutamine 1134–serine 1156. Composition is skewed to polar residues over residues glutamine 749–lysine 766, lysine 778–phenylalanine 791, and serine 847–serine 863. Composition is skewed to low complexity over residues threonine 881–threonine 910 and serine 940–alanine 961. Residues alanine 1138–serine 1156 are compositionally biased toward low complexity.

This sequence belongs to the protein kinase superfamily. Tyr protein kinase family. SYK/ZAP-70 subfamily. In terms of tissue distribution, ubiquitously present in all tissues tested. Expressed in the somatic cells of gut, pharynx, body wall muscle, neurons, skin and excretory canal cells.

The protein localises to the cytoplasm. The enzyme catalyses L-tyrosyl-[protein] + ATP = O-phospho-L-tyrosyl-[protein] + ADP + H(+). In terms of biological role, tyrosine-protein kinase which plays a role in RNA-mediated gene silencing by mediating import of double-stranded RNA (dsRNA) into cells. Not required for import of ingested dsRNA into intestinal cells but involved in subsequent export from intestinal cells to internal tissues. This Caenorhabditis elegans protein is Tyrosine-protein kinase sid-3 (sid-3).